A 221-amino-acid polypeptide reads, in one-letter code: Orotate phosphoribosyltransferase (221 aa).

Lys27 provides a ligand contact to 5-phospho-alpha-D-ribose 1-diphosphate. Position 35–36 (35–36 (FF)) interacts with orotate. Residues 75-76 (YK), Arg102, Lys103, Lys106, His108, and 128-136 (DDVLTAGTA) each bind 5-phospho-alpha-D-ribose 1-diphosphate. Positions 132 and 160 each coordinate orotate.

The protein belongs to the purine/pyrimidine phosphoribosyltransferase family. PyrE subfamily. Homodimer. Mg(2+) serves as cofactor.

It catalyses the reaction orotidine 5'-phosphate + diphosphate = orotate + 5-phospho-alpha-D-ribose 1-diphosphate. The protein operates within pyrimidine metabolism; UMP biosynthesis via de novo pathway; UMP from orotate: step 1/2. In terms of biological role, catalyzes the transfer of a ribosyl phosphate group from 5-phosphoribose 1-diphosphate to orotate, leading to the formation of orotidine monophosphate (OMP). The protein is Orotate phosphoribosyltransferase of Dichelobacter nodosus (strain VCS1703A).